Reading from the N-terminus, the 431-residue chain is Serine--tRNA ligase (431 aa).

Residue T237–E239 coordinates L-serine. R268 to E270 contacts ATP. E291 is an L-serine binding site. E355–S358 contacts ATP. S390 contributes to the L-serine binding site.

It belongs to the class-II aminoacyl-tRNA synthetase family. Type-1 seryl-tRNA synthetase subfamily. In terms of assembly, homodimer. The tRNA molecule binds across the dimer.

It localises to the cytoplasm. It catalyses the reaction tRNA(Ser) + L-serine + ATP = L-seryl-tRNA(Ser) + AMP + diphosphate + H(+). It carries out the reaction tRNA(Sec) + L-serine + ATP = L-seryl-tRNA(Sec) + AMP + diphosphate + H(+). Its pathway is aminoacyl-tRNA biosynthesis; selenocysteinyl-tRNA(Sec) biosynthesis; L-seryl-tRNA(Sec) from L-serine and tRNA(Sec): step 1/1. Functionally, catalyzes the attachment of serine to tRNA(Ser). Is also able to aminoacylate tRNA(Sec) with serine, to form the misacylated tRNA L-seryl-tRNA(Sec), which will be further converted into selenocysteinyl-tRNA(Sec). The protein is Serine--tRNA ligase of Neisseria meningitidis serogroup B (strain ATCC BAA-335 / MC58).